A 302-amino-acid chain; its full sequence is Putative peptide permease protein BMEII0861 (302 aa).

The interval 1 to 22 (MRSSIHASRLRKMGQSIPASTG) is disordered. The next 5 membrane-spanning stretches (helical) occupy residues 38 to 58 (IFGL…PLWL), 101 to 121 (LLVA…IGAI), 147 to 167 (IFLL…VVVI), 230 to 250 (ILLE…AASW), and 268 to 288 (WQWL…NFIG). Residues 97–288 (GRISLLVAVS…LAVLAINFIG (192 aa)) form the ABC transmembrane type-1 domain.

Belongs to the binding-protein-dependent transport system permease family. In terms of assembly, the complex is composed of two ATP-binding proteins (BMEII0863 and BMEII0864), two transmembrane proteins (BMEII0860 and BMEII0861) and a solute-binding protein (BMEII0859).

It is found in the cell inner membrane. Functionally, probably part of an ABC transporter complex that could be involved in peptide import. Probably responsible for the translocation of the substrate across the membrane. This chain is Putative peptide permease protein BMEII0861, found in Brucella melitensis biotype 1 (strain ATCC 23456 / CCUG 17765 / NCTC 10094 / 16M).